The following is a 70-amino-acid chain: Small ribosomal subunit protein bS21B (70 aa).

It belongs to the bacterial ribosomal protein bS21 family.

This Cupriavidus metallidurans (strain ATCC 43123 / DSM 2839 / NBRC 102507 / CH34) (Ralstonia metallidurans) protein is Small ribosomal subunit protein bS21B.